The following is an 81-amino-acid chain: EC protein I/II (81 aa).

It belongs to the metallothionein superfamily. Type 15 family.

Binds 5 molecules of zinc. May have a role in Zn(2+) homeostasis during embryogenesis. The chain is EC protein I/II from Triticum aestivum (Wheat).